Consider the following 92-residue polypeptide: Phospholemman (92 aa).

The first 20 residues, M1–A20, serve as a signal peptide directing secretion. At E21–T35 the chain is on the extracellular side. A helical membrane pass occupies residues L36–L56. Residues S57–R92 are Cytoplasmic-facing. Residue C60 is the site of S-palmitoyl cysteine attachment. C62 is subject to S-glutathionyl cysteine; alternate. A lipid anchor (S-palmitoyl cysteine; alternate) is attached at C62. Positions Q66–R92 are disordered. T79 carries the post-translational modification Phosphothreonine. Residue S82 is modified to Phosphoserine. S83 carries the phosphoserine; by PKA and PKC modification. Positions S83 to R92 are enriched in basic residues. S88 is subject to Phosphoserine; by PKA. T89 bears the Phosphothreonine; by PKC mark.

This sequence belongs to the FXYD family. In terms of assembly, homotetramer. Monomer. Regulatory subunit of the sodium/potassium-transporting ATPase (NKA) which is composed of a catalytic alpha subunit, a non-catalytic beta subunit and an additional regulatory subunit. The monomeric form associates with NKA while the oligomeric form does not. Interacts with the catalytic alpha-1 subunit ATP1A1. Also interacts with the catalytic alpha-2 and alpha-3 subunits ATP1A2 and ATP1A3. Very little interaction with ATP1A1, ATP1A2 or ATP1A3 when phosphorylated at Ser-83. Interacts with the non-catalytic beta-1 subunit ATP1B1. Oxidative stress decreases interaction with ATP1A1 but increases interaction with ATP1B1. Post-translationally, major plasma membrane substrate for cAMP-dependent protein kinase (PKA) and protein kinase C (PKC) in several different tissues. Phosphorylated in response to insulin and adrenergic stimulation. Phosphorylation at Ser-88 stimulates sodium/potassium-transporting ATPase activity while the unphosphorylated form inhibits sodium/potassium-transporting ATPase activity. Phosphorylation increases tetramerization, decreases binding to ATP1A1 and reduces inhibition of ATP1A1 activity. Phosphorylation at Ser-83 leads to greatly reduced interaction with ATP1A1, ATP1A2 and ATP1A3. May be phosphorylated by DMPK. Palmitoylation increases half-life and stability and is enhanced upon phosphorylation at Ser-88 by PKA. In terms of tissue distribution, in adult brain, highest levels are found in the cerebellum and in the lateral, third and fourth ventricles of the choroid plexus (at protein level). Also detected in cells of a portion of the ependymal lining of the lateral ventricle on its rostral surface posterior to the caudate putamen (at protein level). Expressed in a subset of neurons which secrete gonadotropin-releasing hormone.

The protein localises to the cell membrane. The protein resides in the sarcolemma. It localises to the apical cell membrane. Its subcellular location is the membrane. It is found in the caveola. The protein localises to the T-tubule. In terms of biological role, associates with and regulates the activity of the sodium/potassium-transporting ATPase (NKA) which transports Na(+) out of the cell and K(+) into the cell. Inhibits NKA activity in its unphosphorylated state and stimulates activity when phosphorylated. Reduces glutathionylation of the NKA beta-1 subunit ATP1B1, thus reversing glutathionylation-mediated inhibition of ATP1B1. Contributes to female sexual development by maintaining the excitability of neurons which secrete gonadotropin-releasing hormone. The protein is Phospholemman of Rattus norvegicus (Rat).